The primary structure comprises 484 residues: Putative amidase AmiA2 (484 aa).

Residues Lys-93 and Ser-167 each act as charge relay system in the active site. The Acyl-ester intermediate role is filled by Ser-191.

This sequence belongs to the amidase family.

The enzyme catalyses a monocarboxylic acid amide + H2O = a monocarboxylate + NH4(+). This is Putative amidase AmiA2 (amiA2) from Mycobacterium bovis (strain ATCC BAA-935 / AF2122/97).